The sequence spans 258 residues: Imidazole glycerol phosphate synthase subunit HisF (258 aa).

Active-site residues include Asp-11 and Asp-130.

Belongs to the HisA/HisF family. Heterodimer of HisH and HisF.

The protein resides in the cytoplasm. The enzyme catalyses 5-[(5-phospho-1-deoxy-D-ribulos-1-ylimino)methylamino]-1-(5-phospho-beta-D-ribosyl)imidazole-4-carboxamide + L-glutamine = D-erythro-1-(imidazol-4-yl)glycerol 3-phosphate + 5-amino-1-(5-phospho-beta-D-ribosyl)imidazole-4-carboxamide + L-glutamate + H(+). It functions in the pathway amino-acid biosynthesis; L-histidine biosynthesis; L-histidine from 5-phospho-alpha-D-ribose 1-diphosphate: step 5/9. Its function is as follows. IGPS catalyzes the conversion of PRFAR and glutamine to IGP, AICAR and glutamate. The HisF subunit catalyzes the cyclization activity that produces IGP and AICAR from PRFAR using the ammonia provided by the HisH subunit. The polypeptide is Imidazole glycerol phosphate synthase subunit HisF (Stenotrophomonas maltophilia (strain K279a)).